We begin with the raw amino-acid sequence, 299 residues long: Oxygen-dependent coproporphyrinogen-III oxidase (299 aa).

Ser-92 lines the substrate pocket. A divalent metal cation contacts are provided by His-96 and His-106. Catalysis depends on His-106, which acts as the Proton donor. 108 to 110 contacts substrate; sequence NVR. A divalent metal cation is bound by residues His-145 and His-175. Residues 239–274 form an important for dimerization region; the sequence is YVEFNLVYDRGTLFGLQSGGRAESILMSLPPRVRWE. 257-259 lines the substrate pocket; it reads GGR.

The protein belongs to the aerobic coproporphyrinogen-III oxidase family. As to quaternary structure, homodimer. Requires a divalent metal cation as cofactor.

It localises to the cytoplasm. The catalysed reaction is coproporphyrinogen III + O2 + 2 H(+) = protoporphyrinogen IX + 2 CO2 + 2 H2O. The protein operates within porphyrin-containing compound metabolism; protoporphyrin-IX biosynthesis; protoporphyrinogen-IX from coproporphyrinogen-III (O2 route): step 1/1. Involved in the heme biosynthesis. Catalyzes the aerobic oxidative decarboxylation of propionate groups of rings A and B of coproporphyrinogen-III to yield the vinyl groups in protoporphyrinogen-IX. The chain is Oxygen-dependent coproporphyrinogen-III oxidase from Xanthomonas euvesicatoria pv. vesicatoria (strain 85-10) (Xanthomonas campestris pv. vesicatoria).